Reading from the N-terminus, the 435-residue chain is MPKFKAARGAGVQEKHAPLAEQILAGDAVRAGTREKRRGRGTGDEEEEYVGPRLTRRILQQARQQQEELEAEHGSGDRPAVPRERTTRLGPGVPQDGSDDEEWPTLEQAAARAGPGYQAEVVVDPEDERAIEMFMNQNPPARRTLADIIMEKLTEKQTEVETVMSEVSGFPVPQLDPRVLEVYRGVREVLSKYRSGKLPKAFKIIPALSNWEQILYITEPEAWTAAAMYQATRIFASNLKERMAQRFYNLVLLPRVRDDIAEYKRLNFHLYMALKKALFKPGAWFKGILIPLCESGTCTLREAIIVGSIITKCSIPVLHSSAAMLKIAEMEYSGANSIFLRLLLDKKYALPYRVLDALVFHFLGFRTEKRELPVLWHQCLLTLVQRYKADLATEQKEALLELLRLQPHPQLSPEIRRELQSAVPRDVEDVPVTME.

Positions 1 to 102 are disordered; that stretch reads MPKFKAARGA…VPQDGSDDEE (102 aa). Omega-N-methylarginine is present on Arg40. The span at 71–87 shows a compositional bias: basic and acidic residues; sequence AEHGSGDRPAVPRERTT. Ser98 is subject to Phosphoserine. At Thr154 the chain carries Phosphothreonine. 2 positions are modified to phosphoserine: Ser165 and Ser412.

It belongs to the bystin family. Binds trophinin, tastin and cytokeratins.

It localises to the cytoplasm. The protein localises to the nucleus. Its subcellular location is the nucleolus. In terms of biological role, required for processing of 20S pre-rRNA precursor and biogenesis of 40S ribosomal subunits. This Bos taurus (Bovine) protein is Bystin (BYSL).